A 226-amino-acid chain; its full sequence is Large ribosomal subunit protein uL1 (226 aa).

This sequence belongs to the universal ribosomal protein uL1 family. As to quaternary structure, part of the 50S ribosomal subunit.

Its function is as follows. Binds directly to 23S rRNA. The L1 stalk is quite mobile in the ribosome, and is involved in E site tRNA release. Functionally, protein L1 is also a translational repressor protein, it controls the translation of the L11 operon by binding to its mRNA. The sequence is that of Large ribosomal subunit protein uL1 from Borrelia garinii subsp. bavariensis (strain ATCC BAA-2496 / DSM 23469 / PBi) (Borreliella bavariensis).